A 122-amino-acid chain; its full sequence is Putative MOB kinase activator-like 2B (122 aa).

2 residues coordinate Zn(2+): histidine 69 and histidine 74.

Belongs to the MOB1/phocein family.

The protein localises to the nucleus. The protein resides in the cytoplasm. It is found in the cytoskeleton. It localises to the phragmoplast. This chain is Putative MOB kinase activator-like 2B, found in Arabidopsis thaliana (Mouse-ear cress).